We begin with the raw amino-acid sequence, 427 residues long: Rhodocoxin reductase (427 aa).

2–34 is an FAD binding site; it reads SIVIIGSGQAGFEAAVSLRSHGFSGTITLVGDE. NAD(+) is bound at residue 144 to 172; it reads SLVVIGAGFIGLEVAAAARKKGLDVTVVE.

Belongs to the FAD-dependent oxidoreductase family. FAD serves as cofactor.

The degradation of the thiocarbamate herbicide EPTC by cytochrome CYP116 (thcB) requires the participation of a flavoprotein, rhodocoxin reductase, and an iron-sulfur protein, rhodocoxin, to mediate the transfer of electrons from NADH to P450 for oxygen activation. This Rhodococcus erythropolis (Arthrobacter picolinophilus) protein is Rhodocoxin reductase (thcD).